Here is a 359-residue protein sequence, read N- to C-terminus: Fructose-bisphosphate aldolase (359 aa).

D-glyceraldehyde 3-phosphate is bound at residue serine 62. The active-site Proton donor is aspartate 109. Residues histidine 110, aspartate 144, glutamate 174, and histidine 226 each coordinate Zn(2+). Glycine 227 is a dihydroxyacetone phosphate binding site. Histidine 265 serves as a coordination point for Zn(2+). Dihydroxyacetone phosphate is bound by residues 266 to 268 and 287 to 290; these read GGS and NLDT.

The protein belongs to the class II fructose-bisphosphate aldolase family. Homodimer. Zn(2+) is required as a cofactor.

It localises to the cytoplasm. It carries out the reaction beta-D-fructose 1,6-bisphosphate = D-glyceraldehyde 3-phosphate + dihydroxyacetone phosphate. The protein operates within carbohydrate degradation; glycolysis; D-glyceraldehyde 3-phosphate and glycerone phosphate from D-glucose: step 4/4. Its function is as follows. Catalyzes the aldol condensation of dihydroxyacetone phosphate (DHAP or glycerone-phosphate) with glyceraldehyde 3-phosphate (G3P) to form fructose 1,6-bisphosphate (FBP) in gluconeogenesis and the reverse reaction in glycolysis. The polypeptide is Fructose-bisphosphate aldolase (FBA1) (Candida albicans (strain SC5314 / ATCC MYA-2876) (Yeast)).